The primary structure comprises 199 residues: Small ribosomal subunit protein uS4 (199 aa).

The region spanning 94-157 (SRLDNLVYRA…RKLKLVQEAL (64 aa)) is the S4 RNA-binding domain.

It belongs to the universal ribosomal protein uS4 family. Part of the 30S ribosomal subunit. Contacts protein S5. The interaction surface between S4 and S5 is involved in control of translational fidelity.

In terms of biological role, one of the primary rRNA binding proteins, it binds directly to 16S rRNA where it nucleates assembly of the body of the 30S subunit. Its function is as follows. With S5 and S12 plays an important role in translational accuracy. This chain is Small ribosomal subunit protein uS4, found in Mycoplasmopsis synoviae (strain 53) (Mycoplasma synoviae).